We begin with the raw amino-acid sequence, 155 residues long: Myosin light chain alkali (155 aa).

EF-hand domains are found at residues 7-41 (REVE…LNLN) and 80-115 (GCYE…LGES).

Myosin is a hexamer of 2 heavy chains and 4 light chains.

This chain is Myosin light chain alkali (Mlc1), found in Drosophila virilis (Fruit fly).